The chain runs to 136 residues: Small ribosomal subunit protein eS12 (136 aa).

This sequence belongs to the eukaryotic ribosomal protein eS12 family.

The protein is Small ribosomal subunit protein eS12 (rps12) of Dictyostelium discoideum (Social amoeba).